A 76-amino-acid chain; its full sequence is Rhesus theta defensin-1/3 subunit A (76 aa).

An N-terminal signal peptide occupies residues 1–22 (MRTFALLTAMLLLVALHAQAEA). Positions 23–64 (RQARADEAAAQQQPGTDDQGMAHSFTWPENAALPLSESAKGL) are excised as a propeptide. The segment at 25–45 (ARADEAAAQQQPGTDDQGMAH) is disordered. Arginine 65 participates in a covalent cross-link: Cyclopeptide (Arg-Cys) (interchain with C-73 in subunit A); in form RTD-3. A Cyclopeptide (Arg-Cys) (interchain with C-73 in subunit B); in form RTD-1 cross-link involves residue arginine 65. Cysteine 68 and cysteine 73 are disulfide-bonded. A Cyclopeptide (Cys-Arg) (interchain with R-65 in subunit A); in form RTD-3 cross-link involves residue cysteine 73. A Cyclopeptide (Cys-Arg) (interchain with R-65 in subunit B); in form RTD-1 cross-link involves residue cysteine 73. Residues 74-76 (RLL) constitute a propeptide that is removed on maturation.

It belongs to the alpha-defensin family. Theta subfamily. In terms of assembly, RTD-1 is a cyclic heterodimer composed of subunits A and B; disulfide-linked. RTD-3 is a cyclic homodimer composed of two subunits A; disulfide-linked. In terms of processing, forms a cyclic peptide with subunit A (RTD-3) or with subunit B (RTD-1). An additional intersubunit disulfide bond is formed. RTD-1 is expressed in bone marrow. Detected in promyelocytes, myelocytes and mature neutrophils and monocytes.

Functionally, RTD-1 and RTD-3 have similar antimicrobial activities against the Gram-positive bacteria S.aureus 502A and L.monocytogenes, the Gram-negative bacteria S.typhimurium and E.coli ML35, and the fungi C.albicans 16820 and C.neoformans 271A. The sequence is that of Rhesus theta defensin-1/3 subunit A (RTD1A) from Macaca mulatta (Rhesus macaque).